The primary structure comprises 844 residues: MAIEKLSPGMQQYVDIKKQYPDAFLLFRMGDFYELFYEDAVNAAQILEISLTSRNKNADNPIPMAGVPYHSAQQYIDVLIEQGYKVAIAEQMEDPKQAVGVVKREVVQVITPGTVVDSSKPDSQNNFLVSIDREGNQFGLAYMDLVTGDFYVTGLLDFTLVCGEIRNLKAREVVLGYDLSEEEEQILSRQMNLVLSYEKESFEDLHLLDLRLATVEQTASSKLLQYVHRTQMRELNHLKPVIRYEIKDFLQMDYATKASLDLVENARSGKKQGSLFWLLDETKTAMGMRLLRSWIHRPLIDKERIVQRQEVVQVFLDHFFERSDLTDSLKGVYDIERLASRVSFGKTNPKDLLQLATTLSSVPRIRAILEGMEQPTLAYLIAQLDAIPELESLISAAIAPEAPHVITDGGIIRTGFDETLDKYXCVXREGTSWIAEIEAKERENSGISTLKIDYNKKDGYYFHVTNSQLGNVPAHFFRKATLKNSERFGTEELARIEGDMLEAREKSANLEYEIFMRIREEVGKYIQRLQALAQGIATVDVLQSLAVVAETQHLIRPEFGDDSQIDIRKGRHAVVEKVMGAQTYIPNTIQMAEDTSIQLITGPNMSGKSTYMRQLAMTAVMAQLGSYVPAESAHLPIFDAIFTRIGAADDLVSGQSTFMVEMMEANNAISHATKNSLILFDELGRGTATYDGMALAQSIIEYIHEHIGAKTLFATHYHELTSLESSLQHLVNVHVATLEQDGQVTFLHKIEPGPADKSXGIHVAKIAGLPADLLARADKILXQLENQGTESPPPMRQTSAVTEHISLFDRAEEHPILAELAKLDVYNMTPMQVMNVLVELKQKL.

An ATP-binding site is contributed by 602–609 (GPNMSGKS).

It belongs to the DNA mismatch repair MutS family.

This protein is involved in the repair of mismatches in DNA. It is possible that it carries out the mismatch recognition step. This protein has a weak ATPase activity. The protein is DNA mismatch repair protein MutS of Streptococcus pneumoniae serotype 19F (strain G54).